A 126-amino-acid chain; its full sequence is Profilin (126 aa).

It belongs to the profilin family. As to quaternary structure, occurs in many kinds of cells as a complex with monomeric actin in a 1:1 ratio.

Its subcellular location is the cytoplasm. The protein resides in the cytoskeleton. Binds to actin and affects the structure of the cytoskeleton. At high concentrations, profilin prevents the polymerization of actin, whereas it enhances it at low concentrations. By binding to PIP2, it inhibits the formation of IP3 and DG. This chain is Profilin, found in Branchiostoma belcheri (Amphioxus).